Reading from the N-terminus, the 501-residue chain is MSSLARTTRADVVLVGAGIMSATLGALLRRLQPDWSMTFVERLDAVAAESSSPWNNAGTGHSALCELNYTPQRADGSIDIAKAVRINEQFQVTRQFWAYAVENGMLTDRGFVTPIPHASFVRGARAVEYLRRRQQALAPNPLFAGIELIEDADEFARRLPLMADRRDFSEPTALNWARHGTDVDFGALSRQLIGFCVRGGATALFGHQVHNLTRESDGSWTLLIRNRRTGEKHWCNAKFVLVGAGGDALPLLQKSGIGEARGFAGFPIGGRFLRADNPVLTEAHRAKVYGAPAPGAPPLGALHLDLRYVNGKPWLVFGPYAGWSPKFLKHGHFTDLPRSVRPHNLVALLGVGVTQLTLLRYLIGQLRLSAPDRMRMLREFAPTAVDSDWELTVAGQRVQVIRRDRRRGGVLDFDTTVVAAGDGSIAGLLGGSPGASTAVPIMLDVLQRCFADRYRSWLPALKEMVPSLGVTLSDEPALYEEVYSWGTKILGLDELDEERPK.

The protein belongs to the MQO family. Requires FAD as cofactor.

The enzyme catalyses (S)-malate + a quinone = a quinol + oxaloacetate. The protein operates within carbohydrate metabolism; tricarboxylic acid cycle; oxaloacetate from (S)-malate (quinone route): step 1/1. The sequence is that of Probable malate:quinone oxidoreductase from Mycolicibacterium paratuberculosis (strain ATCC BAA-968 / K-10) (Mycobacterium paratuberculosis).